The following is a 259-amino-acid chain: Truncated Ankyrin repeat protein OPG003 (259 aa).

It belongs to the orthopoxvirus OPG003 family.

This chain is Truncated Ankyrin repeat protein OPG003 (OPG003), found in Vaccinia virus (strain Copenhagen) (VACV).